Consider the following 280-residue polypeptide: Probable endonuclease 4 (280 aa).

Positions 69, 109, 145, 179, 182, 216, 229, 231, and 261 each coordinate Zn(2+).

It belongs to the AP endonuclease 2 family. Requires Zn(2+) as cofactor.

The catalysed reaction is Endonucleolytic cleavage to 5'-phosphooligonucleotide end-products.. Functionally, endonuclease IV plays a role in DNA repair. It cleaves phosphodiester bonds at apurinic or apyrimidinic (AP) sites, generating a 3'-hydroxyl group and a 5'-terminal sugar phosphate. The sequence is that of Probable endonuclease 4 from Pelodictyon phaeoclathratiforme (strain DSM 5477 / BU-1).